The sequence spans 95 residues: Neutrophil antibiotic peptide NP-4 (95 aa).

An N-terminal signal peptide occupies residues 1–19 (MRTLALLAAILLVTLQAQA). The propeptide occupies 20–62 (ELHSGMADDGVDQQQPRAQDLDVAVYIKQDETSPLEVLGAKAG). 3 disulfide bridges follow: Cys65–Cys93, Cys67–Cys82, and Cys72–Cys92.

Belongs to the alpha-defensin family.

Its subcellular location is the secreted. Its function is as follows. Microbicidal activity. The protein is Neutrophil antibiotic peptide NP-4 of Oryctolagus cuniculus (Rabbit).